Consider the following 272-residue polypeptide: Putative pyruvate, phosphate dikinase regulatory protein (272 aa).

Residue 153–160 participates in ADP binding; sequence GVSRTSKT.

Belongs to the pyruvate, phosphate/water dikinase regulatory protein family. PDRP subfamily.

The catalysed reaction is N(tele)-phospho-L-histidyl/L-threonyl-[pyruvate, phosphate dikinase] + ADP = N(tele)-phospho-L-histidyl/O-phospho-L-threonyl-[pyruvate, phosphate dikinase] + AMP + H(+). It catalyses the reaction N(tele)-phospho-L-histidyl/O-phospho-L-threonyl-[pyruvate, phosphate dikinase] + phosphate + H(+) = N(tele)-phospho-L-histidyl/L-threonyl-[pyruvate, phosphate dikinase] + diphosphate. In terms of biological role, bifunctional serine/threonine kinase and phosphorylase involved in the regulation of the pyruvate, phosphate dikinase (PPDK) by catalyzing its phosphorylation/dephosphorylation. The protein is Putative pyruvate, phosphate dikinase regulatory protein of Streptococcus sanguinis (strain SK36).